Here is a 393-residue protein sequence, read N- to C-terminus: Seven-bladed beta-propeller protein Rv1057 (393 aa).

A disordered region spans residues 208–230 (DGGRIGSRSRSRQKSSKPRGNQA). Basic residues predominate over residues 214 to 224 (SRSRSRQKSSK).

In terms of biological role, may play an important role in host-pathogen interactions and in ESAT-6 secretion. This chain is Seven-bladed beta-propeller protein Rv1057, found in Mycobacterium tuberculosis (strain ATCC 25618 / H37Rv).